The primary structure comprises 356 residues: Cobalt-precorrin-5B C(1)-methyltransferase (356 aa).

It belongs to the CbiD family.

It carries out the reaction Co-precorrin-5B + S-adenosyl-L-methionine = Co-precorrin-6A + S-adenosyl-L-homocysteine. It participates in cofactor biosynthesis; adenosylcobalamin biosynthesis; cob(II)yrinate a,c-diamide from sirohydrochlorin (anaerobic route): step 6/10. Its function is as follows. Catalyzes the methylation of C-1 in cobalt-precorrin-5B to form cobalt-precorrin-6A. The protein is Cobalt-precorrin-5B C(1)-methyltransferase of Geobacter sp. (strain M21).